Reading from the N-terminus, the 501-residue chain is Leukocyte receptor cluster member 9 (501 aa).

Disordered stretches follow at residues methionine 1–proline 43, arginine 61–leucine 86, glycine 203–glutamate 234, and glutamine 281–alanine 300. The C3H1-type zinc finger occupies proline 40 to alanine 67.

In Homo sapiens (Human), this protein is Leukocyte receptor cluster member 9 (LENG9).